We begin with the raw amino-acid sequence, 1169 residues long: MEPRESGKAPVTFDDITVYLLQEEWVLLSQQQKELCGSNKLVAPLGPTVANPELFRKFGRGPEPWLGSVQGQRSLLEHHPGKKQMGYMGEMEVQGPTRESGQSLPPQKKAYLSHLSTGSGHIEGDWAGRNRKLLKPRSIQKSWFVQFPWLIMNEEQTALFCSACREYPSIRDKRSRLIEGYTGPFKVETLKYHAKSKAHMFCVNALAARDPIWAARFRSIRDPPGDVLASPEPLFTADCPIFYPPGPLGGFDSMAELLPSSRAELEDPGGDGAIPAMYLDCISDLRQKEITDGIHSSSDINILYNDAVESCIQDPSAEGLSEEVPVVFEELPVVFEDVAVYFTREEWGMLDKRQKELYRDVMRMNYELLASLGPAAAKPDLISKLERRAAPWIKDPNGPKWGKGRPPGNKKMVAVREADTQASAADSALLPGSPVEARASCCSSSICEEGDGPRRIKRTYRPRSIQRSWFGQFPWLVIDPKETKLFCSACIERPNLHDKSSRLVRGYTGPFKVETLKYHEVSKAHRLCVNTVEIKEDTPHTALVPEISSDLMANMEHFFNAAYSIAYHSRPLNDFEKILQLLQSTGTVILGKYRNRTACTQFIKYISETLKREILEDVRNSPCVSVLLDSSTDASEQACVGIYIRYFKQMEVKESYITLAPLYSETADGYFETIVSALDELDIPFRKPGWVVGLGTDGSAMLSCRGGLVEKFQEVIPQLLPVHCVAHRLHLAVVDACGSIDLVKKCDRHIRTVFKFYQSSNKRLNELQEGAAPLEQEIIRLKDLNAVRWVASRRRTLHALLVSWPALARHLQRVAEAGGQIGHRAKGMLKLMRGFHFVKFCHFLLDFLSIYRPLSEVCQKEIVLITEVNATLGRAYVALESLRHQAGPKEEEFNASFKDGRLHGICLDKLEVAEQRFQADRERTVLTGIEYLQQRFDADRPPQLKNMEVFDTMAWPSGIELASFGNDDILNLARYFECSLPTGYSEEALLEEWLGLKTIAQHLPFSMLCKNALAQHCRFPLLSKLMAVVVCVPISTSCCERGFKAMNRIRTDERTKLSNEVLNMLMMTAVNGVAVTEYDPQPAIQHWYLTSSGRRFSHVYTCAQVPARSPASARLRKEEMGALYVEEPRTQKPPILPSREAAEVLKDCIMEPPERLLYPHTSQEAPGMS.

The KRAB 1 domain occupies 11-77 (VTFDDITVYL…SVQGQRSLLE (67 aa)). A TTF-type 1 zinc finger spans residues 135-218 (KPRSIQKSWF…RDPIWAARFR (84 aa)). One can recognise a KRAB 2 domain in the interval 333–404 (VVFEDVAVYF…DPNGPKWGKG (72 aa)). The TTF-type 2 zinc-finger motif lies at 461–544 (RPRSIQRSWF…KEDTPHTALV (84 aa)).

Its subcellular location is the nucleus. Its function is as follows. May be involved in transcriptional regulation. This chain is Zinc finger protein 862 (ZNF862), found in Homo sapiens (Human).